Here is a 676-residue protein sequence, read N- to C-terminus: tRNA 5-methylaminomethyl-2-thiouridine biosynthesis bifunctional protein MnmC (676 aa).

Residues 1–241 (MFTVTPAKIY…KRECLCGIKN (241 aa)) are tRNA (mnm(5)s(2)U34)-methyltransferase. The tract at residues 268–676 (IGGGIASLFT…RKLLKGTEIK (409 aa)) is FAD-dependent cmnm(5)s(2)U34 oxidoreductase.

In the N-terminal section; belongs to the methyltransferase superfamily. tRNA (mnm(5)s(2)U34)-methyltransferase family. This sequence in the C-terminal section; belongs to the DAO family. FAD is required as a cofactor.

It localises to the cytoplasm. The catalysed reaction is 5-aminomethyl-2-thiouridine(34) in tRNA + S-adenosyl-L-methionine = 5-methylaminomethyl-2-thiouridine(34) in tRNA + S-adenosyl-L-homocysteine + H(+). Catalyzes the last two steps in the biosynthesis of 5-methylaminomethyl-2-thiouridine (mnm(5)s(2)U) at the wobble position (U34) in tRNA. Catalyzes the FAD-dependent demodification of cmnm(5)s(2)U34 to nm(5)s(2)U34, followed by the transfer of a methyl group from S-adenosyl-L-methionine to nm(5)s(2)U34, to form mnm(5)s(2)U34. The protein is tRNA 5-methylaminomethyl-2-thiouridine biosynthesis bifunctional protein MnmC of Histophilus somni (strain 2336) (Haemophilus somnus).